Reading from the N-terminus, the 800-residue chain is Blood-group-substance endo-1,4-beta-galactosidase (800 aa).

An N-terminal signal peptide occupies residues Met-1 to Ala-35.

The protein belongs to the glycosyl hydrolase 98 family.

The protein localises to the secreted. It carries out the reaction Endohydrolysis of (1-&gt;4)-beta-D-galactosidic linkages in blood group A and B substances.. Endo-beta-galactosidase capable of releasing both the blood group A trisaccharide (A-Tri; GalNAcalpha1--&gt;3(Fucalpha1--&gt;2)Gal) and B trisaccharide (B-Tri; Galalpha1--&gt;3(Fucalpha1--&gt;2)Gal) glycotopes from blood group A- and B-containing glycoconjugates, respectively. The protein is Blood-group-substance endo-1,4-beta-galactosidase (eabC) of Clostridium perfringens.